The following is a 746-amino-acid chain: Exostosin-1 (746 aa).

Over Met-1–Tyr-7 the chain is Cytoplasmic. The chain crosses the membrane as a helical; Signal-anchor for type II membrane protein span at residues Phe-8 to Phe-28. Topologically, residues Arg-29–Leu-746 are lumenal. N-linked (GlcNAc...) asparagine glycosylation is present at Asn-89. Intrachain disulfides connect Cys-98–Cys-103 and Cys-109–Cys-152. A protein is bound by residues Leu-166 and Tyr-203. The UDP site is built by Lys-267, Lys-269, Tyr-271, and Arg-280. Cys-298 and Cys-312 are joined by a disulfide. His-300 is an a protein binding site. 2 residues coordinate UDP: Tyr-319 and Tyr-324. Asn-330 carries an N-linked (GlcNAc...) asparagine glycan. 2 disulfide bridges follow: Cys-334/Cys-355 and Cys-652/Cys-704. Positions 346 and 349 each coordinate UDP.

This sequence belongs to the glycosyltransferase 47 family. As to quaternary structure, part of the heparan sulfate polymerase, a dimeric complex composed of EXT1 and EXT2. Could also form homooligomeric complexes. Interacts with NDST1. Post-translationally, N-glycosylated.

It localises to the golgi apparatus membrane. The protein localises to the golgi apparatus. It is found in the cis-Golgi network membrane. The protein resides in the endoplasmic reticulum membrane. It carries out the reaction 3-O-{alpha-D-GlcNAc-[(1-&gt;4)-beta-D-GlcA-(1-&gt;4)-alpha-D-GlcNAc](n)-(1-&gt;4)-beta-D-GlcA-(1-&gt;3)-beta-D-Gal-(1-&gt;3)-beta-D-Gal-(1-&gt;4)-beta-D-Xyl}-L-seryl-[protein] + UDP-alpha-D-glucuronate = 3-O-{[(1-&gt;4)-beta-D-GlcA-(1-&gt;4)-alpha-D-GlcNAc](n+1)-(1-&gt;4)-beta-D-GlcA-(1-&gt;3)-beta-D-Gal-(1-&gt;3)-beta-D-Gal-(1-&gt;4)-beta-D-Xyl}-L-seryl-[protein] + UDP + H(+). It functions in the pathway protein modification; protein glycosylation. In terms of biological role, glycosyltransferase forming with EXT2 the heterodimeric heparan sulfate polymerase which catalyzes the elongation of the heparan sulfate glycan backbone. Glycan backbone extension consists in the alternating transfer of (1-&gt;4)-beta-D-GlcA and (1-&gt;4)-alpha-D-GlcNAc residues from their respective UDP-sugar donors. Both EXT1 and EXT2 are required for the full activity of the polymerase since EXT1 bears the N-acetylglucosaminyl-proteoglycan 4-beta-glucuronosyltransferase activity within the complex while EXT2 carries the glucuronosyl-N-acetylglucosaminyl-proteoglycan 4-alpha-N-acetylglucosaminyltransferase activity. Heparan sulfate proteoglycans are ubiquitous components of the extracellular matrix and play an important role in tissue homeostasis and signaling. This is Exostosin-1 (EXT1) from Papio anubis (Olive baboon).